The chain runs to 733 residues: Putative cyclic nucleotide-gated ion channel 9 (733 aa).

Residues 1–117 (MLDCGKKAVK…DKFLLLCNKL (117 aa)) lie on the Cytoplasmic side of the membrane. The chain crosses the membrane as a helical span at residues 118 to 138 (FVTSCILAVSVDPLFLYLPFV). At 139-151 (KDNEKCIGIDRKL) the chain is on the extracellular side. Residues 152 to 172 (AIIATTLRTVIDAFYLFHMAL) traverse the membrane as a helical segment. Residues 173–207 (RFRTAFVAPSSRVFGRGELVIDPAQIAKRYLQQYF) are Cytoplasmic-facing. A helical membrane pass occupies residues 208 to 228 (IIDFLSVLPLPQIVVWRFLYI). Topologically, residues 229-239 (SKGASVLATKR) are extracellular. Residues 240 to 260 (ALRSIILVQYIPRFIRLYPLS) form a helical membrane-spanning segment. At 261–280 (SELKRTAGVFAETAWAGAAY) the chain is on the cytoplasmic side. The helical transmembrane segment at 281 to 301 (YLLLYMLASHIVGAIWYLLAL) threads the bilayer. Topologically, residues 302–406 (ERYNGCWTKV…GQGLETSTYP (105 aa)) are extracellular. The helical transmembrane segment at 407-427 (GEVIFSIALAIAGLLLFALLI) threads the bilayer. Residues 428–733 (GNMQTYLQSL…EPDFSADDTS (306 aa)) are Cytoplasmic-facing. A nucleoside 3',5'-cyclic phosphate is bound by residues 513-637 (LFEN…SRQV) and E584. Positions 629-644 (FRRLHSRQVQHTFRFY) are calmodulin-binding. One can recognise an IQ domain in the interval 649–678 (RTWAAIFIQAAWRRYVKKKKLEQLRKEEEE).

Belongs to the cyclic nucleotide-gated cation channel (TC 1.A.1.5) family. Homotetramer or heterotetramer.

The protein localises to the cell membrane. In terms of biological role, putative cyclic nucleotide-gated ion channel. The sequence is that of Putative cyclic nucleotide-gated ion channel 9 (CNGC9) from Arabidopsis thaliana (Mouse-ear cress).